A 300-amino-acid chain; its full sequence is Ribosomal RNA small subunit methyltransferase H (300 aa).

Residues 36–38 (GGH), Asp-55, Leu-89, Asp-103, and Gln-110 each bind S-adenosyl-L-methionine.

This sequence belongs to the methyltransferase superfamily. RsmH family.

The protein localises to the cytoplasm. The enzyme catalyses cytidine(1402) in 16S rRNA + S-adenosyl-L-methionine = N(4)-methylcytidine(1402) in 16S rRNA + S-adenosyl-L-homocysteine + H(+). Its function is as follows. Specifically methylates the N4 position of cytidine in position 1402 (C1402) of 16S rRNA. In Thermotoga neapolitana (strain ATCC 49049 / DSM 4359 / NBRC 107923 / NS-E), this protein is Ribosomal RNA small subunit methyltransferase H.